Reading from the N-terminus, the 83-residue chain is UPF0512 protein G (83 aa).

Belongs to the UPF0512 family.

This is UPF0512 protein G from Dictyostelium discoideum (Social amoeba).